A 121-amino-acid chain; its full sequence is Type II secretion system protein I (121 aa).

Residues Met-1–Gly-6 constitute a propeptide, leader sequence. Met-7 carries the N-methylmethionine modification. Residues Met-7–Met-27 traverse the membrane as a helical segment.

This sequence belongs to the GSP I family. As to quaternary structure, type II secretion is composed of four main components: the outer membrane complex, the inner membrane complex, the cytoplasmic secretion ATPase and the periplasm-spanning pseudopilus. Interacts with core component PulG. In terms of processing, cleaved by prepilin peptidase. Methylated by prepilin peptidase at the amino group of the N-terminal methionine once the leader sequence is cleaved by prepilin peptidase.

The protein localises to the cell inner membrane. Its function is as follows. Component of the type II secretion system required for the energy-dependent secretion of extracellular factors such as proteases and toxins from the periplasm. Part of the pseudopilus tip complex that is critical for the recognition and binding of secretion substrates. This Klebsiella pneumoniae protein is Type II secretion system protein I (pulI).